The following is a 234-amino-acid chain: tRNA (guanine-N(1)-)-methyltransferase (234 aa).

S-adenosyl-L-methionine-binding positions include Gly115 and 135 to 140 (VGDYIL).

Belongs to the RNA methyltransferase TrmD family. As to quaternary structure, homodimer.

It localises to the cytoplasm. It carries out the reaction guanosine(37) in tRNA + S-adenosyl-L-methionine = N(1)-methylguanosine(37) in tRNA + S-adenosyl-L-homocysteine + H(+). In terms of biological role, specifically methylates guanosine-37 in various tRNAs. The polypeptide is tRNA (guanine-N(1)-)-methyltransferase (Rickettsia typhi (strain ATCC VR-144 / Wilmington)).